An 86-amino-acid chain; its full sequence is Large ribosomal subunit protein uL30m (86 aa).

The disordered stretch occupies residues 67–86 (QQRELRKSNPGFIVEKRTID).

The protein belongs to the universal ribosomal protein uL30 family. As to quaternary structure, component of the mitochondrial large ribosomal subunit (mt-LSU). Mature yeast 74S mitochondrial ribosomes consist of a small (37S) and a large (54S) subunit. The 37S small subunit contains a 15S ribosomal RNA (15S mt-rRNA) and 34 different proteins. The 54S large subunit contains a 21S rRNA (21S mt-rRNA) and 46 different proteins.

It localises to the mitochondrion. Functionally, component of the mitochondrial ribosome (mitoribosome), a dedicated translation machinery responsible for the synthesis of mitochondrial genome-encoded proteins, including at least some of the essential transmembrane subunits of the mitochondrial respiratory chain. The mitoribosomes are attached to the mitochondrial inner membrane and translation products are cotranslationally integrated into the membrane. The sequence is that of Large ribosomal subunit protein uL30m (MRPL33) from Saccharomyces cerevisiae (strain ATCC 204508 / S288c) (Baker's yeast).